A 208-amino-acid polypeptide reads, in one-letter code: 3-demethoxyubiquinol 3-hydroxylase (208 aa).

Fe cation is bound by residues E57, E87, H90, E139, E171, and H174.

Belongs to the COQ7 family. Requires Fe cation as cofactor.

The protein localises to the cell membrane. It carries out the reaction a 5-methoxy-2-methyl-3-(all-trans-polyprenyl)benzene-1,4-diol + AH2 + O2 = a 3-demethylubiquinol + A + H2O. It participates in cofactor biosynthesis; ubiquinone biosynthesis. Functionally, catalyzes the hydroxylation of 2-nonaprenyl-3-methyl-6-methoxy-1,4-benzoquinol during ubiquinone biosynthesis. The polypeptide is 3-demethoxyubiquinol 3-hydroxylase (Burkholderia ambifaria (strain ATCC BAA-244 / DSM 16087 / CCUG 44356 / LMG 19182 / AMMD) (Burkholderia cepacia (strain AMMD))).